The sequence spans 446 residues: Minor fimbrium tip subunit Mfa3 (446 aa).

The first 20 residues, 1 to 20 (MMQLKKRYFALILLLFLWSG), serve as a signal peptide directing secretion. Cys21 carries the N-palmitoyl cysteine lipid modification. Residue Cys21 is the site of S-diacylglycerol cysteine attachment. Positions 21-43 (CDRGVDPQPDPLQPDVYLLVNAR) are excised as a propeptide.

This sequence belongs to the bacteroidetes fimbrillin superfamily. FimB/Mfa2 family. In terms of assembly, component of the fimbrium tip. Minor fimbriae are composed of a structural subunit, most often Mfa1, and the accessory subunits Mfa3, Mfa4 and Mfa5. Fimbrium assembly occurs by linear, head-to-tail oligomerization of fimbrial subunits. This is mediated via insertion of a C-terminal beta-strand from one subunit into a groove in the N-terminal domain of the following subunit. Mfa3 is required for Mfa4 and Mfa5 insertion into the fimbrium.

It is found in the fimbrium. The protein localises to the cell outer membrane. In terms of biological role, tip subunit of the minor fimbriae. These filamentous pili are attached to the cell surface; they mediate biofilm formation, adhesion onto host cells and onto other bacteria that are part of the oral microbiome. They play an important role in invasion of periodontal tissues and are recognized as major virulence factors. Fimbrium subunits from different strains have highly divergent sequences, and this correlates with pathogenicity. The chain is Minor fimbrium tip subunit Mfa3 (mfa3) from Porphyromonas gingivalis (strain ATCC 33277 / DSM 20709 / CIP 103683 / JCM 12257 / NCTC 11834 / 2561).